The primary structure comprises 417 residues: Serine hydroxymethyltransferase (417 aa).

Residues L112 and G116–L118 each bind (6S)-5,6,7,8-tetrahydrofolate. K221 is modified (N6-(pyridoxal phosphate)lysine). Position 247 (E247) interacts with (6S)-5,6,7,8-tetrahydrofolate.

It belongs to the SHMT family. In terms of assembly, homodimer. Pyridoxal 5'-phosphate is required as a cofactor.

It localises to the cytoplasm. The enzyme catalyses (6R)-5,10-methylene-5,6,7,8-tetrahydrofolate + glycine + H2O = (6S)-5,6,7,8-tetrahydrofolate + L-serine. The protein operates within one-carbon metabolism; tetrahydrofolate interconversion. It functions in the pathway amino-acid biosynthesis; glycine biosynthesis; glycine from L-serine: step 1/1. Functionally, catalyzes the reversible interconversion of serine and glycine with tetrahydrofolate (THF) serving as the one-carbon carrier. This reaction serves as the major source of one-carbon groups required for the biosynthesis of purines, thymidylate, methionine, and other important biomolecules. Also exhibits THF-independent aldolase activity toward beta-hydroxyamino acids, producing glycine and aldehydes, via a retro-aldol mechanism. The polypeptide is Serine hydroxymethyltransferase (Borreliella burgdorferi (strain ATCC 35210 / DSM 4680 / CIP 102532 / B31) (Borrelia burgdorferi)).